The primary structure comprises 143 residues: Large ribosomal subunit protein uL15 (143 aa).

The disordered stretch occupies residues 1-52 (MKLNTLAPAAGSKSAPKRLGRGIGSGLGKTSGKGHKGQKARSGGYHKVGFEG). Residues 21–31 (RGIGSGLGKTS) are compositionally biased toward gly residues.

This sequence belongs to the universal ribosomal protein uL15 family. In terms of assembly, part of the 50S ribosomal subunit.

Functionally, binds to the 23S rRNA. The sequence is that of Large ribosomal subunit protein uL15 from Francisella tularensis subsp. tularensis (strain FSC 198).